The chain runs to 412 residues: Putative competence-damage inducible protein (412 aa).

It belongs to the CinA family.

In Bacillus cereus (strain ATCC 10987 / NRS 248), this protein is Putative competence-damage inducible protein.